The primary structure comprises 155 residues: 6,7-dimethyl-8-ribityllumazine synthase (155 aa).

5-amino-6-(D-ribitylamino)uracil contacts are provided by residues phenylalanine 24, 58-60, and 82-84; these read AFE and AII. 87–88 lines the (2S)-2-hydroxy-3-oxobutyl phosphate pocket; sequence ST. The active-site Proton donor is the histidine 90. Phenylalanine 115 is a binding site for 5-amino-6-(D-ribitylamino)uracil. Residue arginine 129 coordinates (2S)-2-hydroxy-3-oxobutyl phosphate.

It belongs to the DMRL synthase family.

It catalyses the reaction (2S)-2-hydroxy-3-oxobutyl phosphate + 5-amino-6-(D-ribitylamino)uracil = 6,7-dimethyl-8-(1-D-ribityl)lumazine + phosphate + 2 H2O + H(+). It participates in cofactor biosynthesis; riboflavin biosynthesis; riboflavin from 2-hydroxy-3-oxobutyl phosphate and 5-amino-6-(D-ribitylamino)uracil: step 1/2. Its function is as follows. Catalyzes the formation of 6,7-dimethyl-8-ribityllumazine by condensation of 5-amino-6-(D-ribitylamino)uracil with 3,4-dihydroxy-2-butanone 4-phosphate. This is the penultimate step in the biosynthesis of riboflavin. This Chlorobium phaeovibrioides (strain DSM 265 / 1930) (Prosthecochloris vibrioformis (strain DSM 265)) protein is 6,7-dimethyl-8-ribityllumazine synthase.